Here is a 297-residue protein sequence, read N- to C-terminus: Calponin-1 (297 aa).

The Calponin-homology (CH) domain maps to 28–131 (HQREQELREW…STLLALASMA (104 aa)). Phosphoserine is present on serine 48. Calponin-like repeat units follow at residues 164-189 (IGLQ…RHLY), 204-229 (ISLQ…RQIF), and 243-268 (VSLQ…RQVY). Threonine 170 is modified (phosphothreonine; by ROCK2). Residue serine 175 is modified to Phosphoserine; by ROCK2. A phosphothreonine; by ROCK2 mark is found at threonine 180 and threonine 184. Threonine 259 carries the phosphothreonine; by ROCK2 modification.

It belongs to the calponin family. As to quaternary structure, part of cGMP kinase signaling complex at least composed of ACTA2/alpha-actin, CNN1/calponin H1, PLN/phospholamban, PRKG1 and ITPR1. In terms of tissue distribution, smooth muscle, and tissues containing significant amounts of smooth muscle.

Functionally, thin filament-associated protein that is implicated in the regulation and modulation of smooth muscle contraction. It is capable of binding to actin, calmodulin and tropomyosin. The interaction of calponin with actin inhibits the actomyosin Mg-ATPase activity. This Rattus norvegicus (Rat) protein is Calponin-1 (Cnn1).